The chain runs to 210 residues: Probable GTP-binding protein EngB (210 aa).

Residues 25-199 form the EngB-type G domain; that stretch reads CGIEVAFAGR…RQKLDSWFSE (175 aa). GTP-binding positions include 33 to 40, 60 to 64, 78 to 81, 145 to 148, and 178 to 180; these read GRSNAGKS, GRTQL, DLPG, TKAD, and FSS. Mg(2+) is bound by residues serine 40 and threonine 62.

Belongs to the TRAFAC class TrmE-Era-EngA-EngB-Septin-like GTPase superfamily. EngB GTPase family. The cofactor is Mg(2+).

Its function is as follows. Necessary for normal cell division and for the maintenance of normal septation. This Salmonella paratyphi C (strain RKS4594) protein is Probable GTP-binding protein EngB.